A 425-amino-acid polypeptide reads, in one-letter code: Serine--tRNA ligase (425 aa).

L-serine is bound at residue 229–231 (TSE). Residues 259–261 (RKE) and V275 contribute to the ATP site. E282 lines the L-serine pocket. ATP is bound at residue 349 to 352 (EVTS). Position 384 (T384) interacts with L-serine.

The protein belongs to the class-II aminoacyl-tRNA synthetase family. Type-1 seryl-tRNA synthetase subfamily. Homodimer. The tRNA molecule binds across the dimer.

It is found in the cytoplasm. It carries out the reaction tRNA(Ser) + L-serine + ATP = L-seryl-tRNA(Ser) + AMP + diphosphate + H(+). It catalyses the reaction tRNA(Sec) + L-serine + ATP = L-seryl-tRNA(Sec) + AMP + diphosphate + H(+). The protein operates within aminoacyl-tRNA biosynthesis; selenocysteinyl-tRNA(Sec) biosynthesis; L-seryl-tRNA(Sec) from L-serine and tRNA(Sec): step 1/1. Functionally, catalyzes the attachment of serine to tRNA(Ser). Is also able to aminoacylate tRNA(Sec) with serine, to form the misacylated tRNA L-seryl-tRNA(Sec), which will be further converted into selenocysteinyl-tRNA(Sec). The protein is Serine--tRNA ligase of Borrelia garinii subsp. bavariensis (strain ATCC BAA-2496 / DSM 23469 / PBi) (Borreliella bavariensis).